Here is a 604-residue protein sequence, read N- to C-terminus: Serine/threonine-protein phosphatase 2B catalytic subunit A2 (604 aa).

Positions 21 to 48 (NKTERPQSSTTPIDSKASTVAAANSTAT) are disordered. Thr-31 carries the post-translational modification Phosphothreonine. The span at 35–48 (SKASTVAAANSTAT) shows a compositional bias: low complexity. Fe cation contacts are provided by Asp-144, His-146, and Asp-172. Zn(2+) contacts are provided by Asp-172 and Asn-204. Residue His-205 is the Proton donor of the active site. 2 residues coordinate Zn(2+): His-253 and His-359. The disordered stretch occupies residues 470 to 497 (KKLPQAGKSEATPQPATSASPKHASILD). Over residues 480–489 (ATPQPATSAS) the composition is skewed to polar residues. Residues Ser-489 and Ser-520 each carry the phosphoserine modification. The segment at 501-523 (RRKALRNKILAVAKVSRMYSVLR) is calmodulin-binding.

This sequence belongs to the PPP phosphatase family. PP-2B subfamily. In terms of assembly, composed of two components (A and B), the A component is the catalytic subunit and the B component confers calcium sensitivity. Requires Fe(3+) as cofactor. Zn(2+) is required as a cofactor.

It catalyses the reaction O-phospho-L-seryl-[protein] + H2O = L-seryl-[protein] + phosphate. The enzyme catalyses O-phospho-L-threonyl-[protein] + H2O = L-threonyl-[protein] + phosphate. In terms of biological role, calcium-dependent, calmodulin-stimulated protein phosphatase. This subunit may have a role in the calmodulin activation of calcineurin. The polypeptide is Serine/threonine-protein phosphatase 2B catalytic subunit A2 (CMP2) (Saccharomyces cerevisiae (strain ATCC 204508 / S288c) (Baker's yeast)).